The following is a 425-amino-acid chain: 1,4-beta-D-glucan glucohydrolase (425 aa).

Catalysis depends on Glu164, which acts as the Proton donor. Glu349 serves as the catalytic Nucleophile.

Belongs to the glycosyl hydrolase 1 family. As to quaternary structure, monomer.

The enzyme catalyses Hydrolysis of (1-&gt;4)-linkages in (1-&gt;4)-beta-D-glucans, to remove successive glucose units.. It carries out the reaction Hydrolysis of terminal, non-reducing beta-D-glucosyl residues with release of beta-D-glucose.. Its pathway is glycan metabolism; cellulose degradation. It participates in glycan metabolism; beta-D-glucan degradation. Functionally, broad substrate specificity glycosidase. Releases glucose from soluble glucooligomers, with a preference for longer oligomers; acts more readily on cellotetraose than on cellobiose. Displays similar activities towards the disaccharides lactose and cellobiose. Is also able to hydrolyze various aryl-beta-glycosides in vitro. In Thermotoga neapolitana, this protein is 1,4-beta-D-glucan glucohydrolase (bglA).